A 321-amino-acid chain; its full sequence is Ornithine carbamoyltransferase (321 aa).

Residues Ser53–Thr56, Gln80, Arg104, and His131–Gln134 each bind carbamoyl phosphate. L-ornithine-binding positions include Asn166, Asp230, and Ser234–Met235. Residues Cys270 to Leu271 and Arg298 each bind carbamoyl phosphate.

The protein belongs to the aspartate/ornithine carbamoyltransferase superfamily. OTCase family.

It is found in the cytoplasm. The enzyme catalyses carbamoyl phosphate + L-ornithine = L-citrulline + phosphate + H(+). It functions in the pathway amino-acid degradation; L-arginine degradation via ADI pathway; carbamoyl phosphate from L-arginine: step 2/2. Functionally, reversibly catalyzes the transfer of the carbamoyl group from carbamoyl phosphate (CP) to the N(epsilon) atom of ornithine (ORN) to produce L-citrulline. The sequence is that of Ornithine carbamoyltransferase from Bifidobacterium longum subsp. infantis (strain ATCC 15697 / DSM 20088 / JCM 1222 / NCTC 11817 / S12).